The following is a 1021-amino-acid chain: Nonribosomal peptide synthetase asaC (1021 aa).

Positions 17–418 (RHHVRTSPNA…ARADNMVKIR (402 aa)) are adenylation (A) domain. The Carrier domain maps to 528–603 (KDAGDSVTWL…GLASVIDAGH (76 aa)). S563 carries the O-(pantetheine 4'-phosphoryl)serine modification. The tract at residues 646-888 (LTGATGFLGT…MIPVDFITTA (243 aa)) is short-chain dehydrogenase/reductase (R) domain.

Belongs to the NRP synthetase family.

It participates in secondary metabolite biosynthesis. In terms of biological role, nonribosomal peptide synthetase; part of the gene cluster that mediates the biosynthesis of aspergillic acid, a hydroxamic acid-containing pyrazinone with aliphatic side chains that originates from leucine (Leu) and isoleucine (Ile). Aspergillic acid has antibiotic properties and was shown to be lethal to mice. The first step in the pathway is the production of deoxyaspergillic acid via a condensation between the Ile amine and the Leu carboxylic acid, followed by a reductive release from the protein forming the dipeptide aldehyde NH(2)-Leu-Ile-CHO, which could undergo an intermolecular cyclization resulting in a dihydropyrazinone. As the NRPS asaC lacks a condensation domain, it is improbable that it is responsible for condensation of Leu and Ile. One possibility is that asaC acts on a previously condensed dipeptide and functions as a Leu-Ile reductase to yield deoxyaspergillic acid. After asaC forms deoxyaspergillic acid, the cytochrome P450 asaD oxidizes the pyrazinone to the hydroxamic acid-containing bioactive metabolite aspergillic acid. The hydroxylase/desaturase asaB can then convert aspergillic acid to hydroxyaspergillic acid. Both aspergillic acid and hydroxyaspergillic acid can form complexes with iron producing ferriaspergillin analogs. This chain is Nonribosomal peptide synthetase asaC, found in Aspergillus flavus (strain ATCC 200026 / FGSC A1120 / IAM 13836 / NRRL 3357 / JCM 12722 / SRRC 167).